A 266-amino-acid polypeptide reads, in one-letter code: Ribosomal RNA small subunit methyltransferase A (266 aa).

Residues N10, I12, G37, E58, D82, and N105 each contribute to the S-adenosyl-L-methionine site.

Belongs to the class I-like SAM-binding methyltransferase superfamily. rRNA adenine N(6)-methyltransferase family. RsmA subfamily.

It is found in the cytoplasm. It carries out the reaction adenosine(1518)/adenosine(1519) in 16S rRNA + 4 S-adenosyl-L-methionine = N(6)-dimethyladenosine(1518)/N(6)-dimethyladenosine(1519) in 16S rRNA + 4 S-adenosyl-L-homocysteine + 4 H(+). In terms of biological role, specifically dimethylates two adjacent adenosines (A1518 and A1519) in the loop of a conserved hairpin near the 3'-end of 16S rRNA in the 30S particle. May play a critical role in biogenesis of 30S subunits. The sequence is that of Ribosomal RNA small subunit methyltransferase A from Mycoplasma mycoides subsp. mycoides SC (strain CCUG 32753 / NCTC 10114 / PG1).